A 105-amino-acid polypeptide reads, in one-letter code: Protein METHYLENE BLUE SENSITIVITY 1 (105 aa).

The tract at residues 26–46 is disordered; sequence RGGGKAGIADRTGKEKGGHAK. Residues 36–46 are compositionally biased toward basic and acidic residues; it reads RTGKEKGGHAK.

Mainly expressed in the epidermis.

Its subcellular location is the nucleus. It is found in the cytoplasm. It localises to the stress granule. Functionally, required for acclimation to reactive oxygen species (ROS) responses downstream of beta-cyclocitral (beta-cc) or mediated by dihydroactinidiolide, including singlet oxygen 1O(2) detoxification reactions, especially upon light-mediated photooxidative stress, and leading to programmed cell death. Prevents leaf senescence. Involved in cold acclimation. This is Protein METHYLENE BLUE SENSITIVITY 1 from Arabidopsis thaliana (Mouse-ear cress).